The chain runs to 107 residues: Ferredoxin (107 aa).

2 consecutive 4Fe-4S ferredoxin-type domains span residues 8-37 (ERVV…LDEN) and 38-67 (GKSR…KASE). [4Fe-4S] cluster is bound by residues C17, C20, and C23. [3Fe-4S] cluster is bound by residues C27, C47, and C53. C57 is a [4Fe-4S] cluster binding site.

Monomer. The cofactor is [4Fe-4S] cluster. [3Fe-4S] cluster serves as cofactor. Post-translationally, the N-terminus is blocked.

Its function is as follows. Ferredoxins are iron-sulfur proteins that transfer electrons in a wide variety of metabolic reactions. This is Ferredoxin from Pyrobaculum islandicum (strain DSM 4184 / JCM 9189 / GEO3).